A 92-amino-acid polypeptide reads, in one-letter code: Small ribosomal subunit protein uS19 (92 aa).

It belongs to the universal ribosomal protein uS19 family.

Functionally, protein S19 forms a complex with S13 that binds strongly to the 16S ribosomal RNA. The polypeptide is Small ribosomal subunit protein uS19 (Geobacillus sp. (strain WCH70)).